A 388-amino-acid chain; its full sequence is Ribonuclease D (388 aa).

The 3'-5' exonuclease domain occupies 24–191 (QYVSDEASLN…LYPQLADKLK (168 aa)). An HRDC domain is found at 230-310 (TEHQLAYLKV…QTADLSNPPE (81 aa)).

The protein belongs to the RNase D family. A divalent metal cation serves as cofactor.

The protein localises to the cytoplasm. It carries out the reaction Exonucleolytic cleavage that removes extra residues from the 3'-terminus of tRNA to produce 5'-mononucleotides.. Exonuclease involved in the 3' processing of various precursor tRNAs. Initiates hydrolysis at the 3'-terminus of an RNA molecule and releases 5'-mononucleotides. This is Ribonuclease D from Shewanella sp. (strain ANA-3).